We begin with the raw amino-acid sequence, 140 residues long: Cysteine desulfuration protein SufE (140 aa).

C51 serves as the catalytic Cysteine persulfide intermediate.

The protein belongs to the SufE family. As to quaternary structure, homodimer. Interacts with SufS.

It is found in the cytoplasm. The protein operates within cofactor biosynthesis; iron-sulfur cluster biosynthesis. Participates in cysteine desulfuration mediated by SufS. Cysteine desulfuration mobilizes sulfur from L-cysteine to yield L-alanine and constitutes an essential step in sulfur metabolism for biosynthesis of a variety of sulfur-containing biomolecules. Functions as a sulfur acceptor for SufS, by mediating the direct transfer of the sulfur atom from the S-sulfanylcysteine of SufS, an intermediate product of cysteine desulfuration process. This chain is Cysteine desulfuration protein SufE, found in Yersinia enterocolitica serotype O:8 / biotype 1B (strain NCTC 13174 / 8081).